A 281-amino-acid chain; its full sequence is Hepatitis A virus cellular receptor 2 homolog (281 aa).

The signal sequence occupies residues 1–19; the sequence is MFSGLTLNCVLLLLQLLLA. The region spanning 20–125 is the Ig-like V-type domain; the sequence is RSLENAYVFE…PGLMNDKKLE (106 aa). At 20–193 the chain is on the extracellular side; sequence RSLENAYVFE…KDSGETIRTA (174 aa). Cystine bridges form between C38–C111, C52–C63, and C58–C110. Positions 61 and 62 each coordinate a 1,2-diacyl-sn-glycero-3-phospho-L-serine. 2 N-linked (GlcNAc...) asparagine glycosylation sites follow: N74 and N100. Residue R112 coordinates a 1,2-diacyl-sn-glycero-3-phospho-L-serine. Ca(2+) is bound by residues F115 and G117. M119 contacts a 1,2-diacyl-sn-glycero-3-phospho-L-serine. N120 contacts Ca(2+). The tract at residues 139–160 is disordered; it reads QTAHGDSTTASPRTLTTERNGS. The O-linked (GalNAc...) threonine glycan is linked to T146. The N-linked (GlcNAc...) asparagine glycan is linked to N172. The chain crosses the membrane as a helical span at residues 194–214; that stretch reads IHIGVGVSAGLTLALIIGVLI. The Cytoplasmic portion of the chain corresponds to 215-281; the sequence is LKWYSCKKKK…YCYVNSQQPS (67 aa). The segment at 252 to 270 is interaction with BAG6; it reads EENIYTIEENVYEVENSNE. A Phosphotyrosine; by ITK modification is found at Y256.

Belongs to the immunoglobulin superfamily. TIM family. As to quaternary structure, interacts with HMGB1; impairs HMGB1 binding to B-DNA and likely HMGB1-mediated innate immune response. Interacts with BAG6. Interacts (phosphorylated) with PIK3R1 and PIK3R2. Interacts (not dependent on its phosphorylation status) with FYN. Interacts (in basal state T-cells) with VAV1; AKT1/2, LCP2, ZAP70, SYK, PIK3R1, FYN, SH3BP2 and SH2D2A. Interacts (in activated T-cells) with LCK and PLCG. Interacts with ILF3; this interaction promotes ILF3 ubiquitination and degradation. In terms of processing, phosphorylated on tyrosine residues; modestly increased after TCR/CD28 stimulation. Can be phosphorylated in the cytoplasmic domain by FYN. Phosphorylation at Tyr-256 is increased by stimulation with ligand LGALS9. N-glycosylated. Expressed in T-helper type 1 lymphocytes. Not expressed by naive T-cells but up-regulated as they differentiate into T-helper-1 cells. Also expressed by differentiated type 1 CD8+ cytotoxic T-cells. Expressed on peritoneal exudate macrophages, monocytes, and splenic dendritic cells (DCs). Expression on natural killer (NK) cells is inversely associated with IFN-gamma production during the initial 24 hours of LPS-induced endotoxic shock. Expressed on mast cells.

The protein resides in the membrane. It localises to the cell junction. The protein localises to the secreted. In terms of biological role, cell surface receptor implicated in modulating innate and adaptive immune responses. Generally accepted to have an inhibiting function. Reports on stimulating functions suggest that the activity may be influenced by the cellular context and/or the respective ligand. Regulates macrophage activation. Inhibits T-helper type 1 lymphocyte (Th1)-mediated auto- and alloimmune responses and promotes immunological tolerance. In CD8+ cells attenuates TCR-induced signaling, specifically by blocking NF-kappaB and NFAT promoter activities resulting in the loss of IL-2 secretion. The function may implicate its association with LCK proposed to impair phosphorylation of TCR subunits. In contrast, shown to activate TCR-induced signaling in T-cells probably implicating ZAP70, LCP2, LCK and FYN. Expressed on Treg cells can inhibit Th17 cell responses. Receptor for LGALS9. Binding to LGALS9 is believed to result in suppression of T-cell responses; the resulting apoptosis of antigen-specific cells may implicate HAVCR2 phosphorylation and disruption of its association with BAG6. Binding to LGALS9 is proposed to be involved in innate immune response to intracellular pathogens. Expressed on Th1 cells interacts with LGALS9 expressed on Mycobacterium tuberculosis-infected macrophages to stimulate antibactericidal activity including IL-1 beta secretion and to restrict intracellular bacterial growth. However, the function as receptor for LGALS9 has been challenged. Also reported to enhance CD8+ T-cell responses to an acute infection such as by Listeria monocytogenes. Receptor for phosphatidylserine (PtSer); PtSer-binding is calcium-dependent. May recognize PtSer on apoptotic cells leading to their phagocytosis. Mediates the engulfment of apoptotic cells by dendritic cells. Expressed on T-cells, promotes conjugation but not engulfment of apoptotic cells. Expressed on dendritic cells (DCs) positively regulates innate immune response and in synergy with Toll-like receptors promotes secretion of TNF-alpha. In tumor-imfiltrating DCs suppresses nucleic acid-mediated innate immune repsonse by interaction with HMGB1 and interfering with nucleic acid-sensing and trafficking of nucleid acids to endosomes. Can enhance mast cell production of Th2 cytokines Il-4, IL-6 and IL-13. Expressed on natural killer (NK) cells acts as a coreceptor to enhance IFN-gamma production in response to LGALS9. In contrast, shown to suppress NK cell-mediated cytotoxicity. Negatively regulates NK cell function in LPS-induced endotoxic shock. This chain is Hepatitis A virus cellular receptor 2 homolog (Havcr2), found in Mus musculus (Mouse).